A 159-amino-acid chain; its full sequence is C-type lectin 1 (159 aa).

Positions 1–23 (MGRFIFISFGLLVVFFFLSGAKG) are cleaved as a signal peptide. 4 cysteine pairs are disulfide-bonded: Cys26–Cys37, Cys54–Cys155, Cys61–Cys157, and Cys130–Cys147. Residues 33–156 (MYGLCYKIFD…CKVKNAFLCQ (124 aa)) form the C-type lectin domain. The N-linked (GlcNAc...) asparagine glycan is linked to Asn118. A Sugar-binding motif is present at residues 119–121 (LTD). Residues Asp121, Asp127, and Asn143 each coordinate Ca(2+).

It belongs to the true venom lectin family. As to quaternary structure, homodimer; disulfide-linked. In terms of tissue distribution, expressed by the venom gland.

It is found in the secreted. In terms of biological role, lectin which recognizes specific carbohydrate structures and agglutinates a variety of animal cells by binding to cell-surface glycoproteins and glycolipids. May be a calcium-dependent lectin. This Bitis gabonica (Gaboon adder) protein is C-type lectin 1.